The chain runs to 194 residues: Molybdenum cofactor guanylyltransferase (194 aa).

GTP is bound by residues 12-14 (LAG), K25, N53, D71, and D101. Position 101 (D101) interacts with Mg(2+).

It belongs to the MobA family. As to quaternary structure, monomer. The cofactor is Mg(2+).

Its subcellular location is the cytoplasm. It catalyses the reaction Mo-molybdopterin + GTP + H(+) = Mo-molybdopterin guanine dinucleotide + diphosphate. In terms of biological role, transfers a GMP moiety from GTP to Mo-molybdopterin (Mo-MPT) cofactor (Moco or molybdenum cofactor) to form Mo-molybdopterin guanine dinucleotide (Mo-MGD) cofactor. The protein is Molybdenum cofactor guanylyltransferase of Escherichia coli O157:H7.